The sequence spans 218 residues: DNA endonuclease I-ChuI (218 aa).

Belongs to the LAGLIDADG endonuclease family.

It localises to the plastid. Its subcellular location is the chloroplast. Functionally, probable endonuclease involved in intron homing. Encoded in the group-I intron of the subunit rRNA-encoding gene (rrnL), it generates a staggered cut with 4-nt (CTCG) 3'-OH overhangs 2 bp downstream from the intron insertion site. The sequence is that of DNA endonuclease I-ChuI from Chlamydomonas applanata (Chlamydomonas humicola).